The sequence spans 303 residues: Protoheme IX farnesyltransferase (303 aa).

6 consecutive transmembrane segments (helical) span residues Met-25–Met-45, Ile-54–Leu-74, Cys-118–Val-138, Ile-166–Val-186, Leu-230–Ile-250, and Phe-280–Ile-300.

The protein belongs to the UbiA prenyltransferase family. Protoheme IX farnesyltransferase subfamily. As to quaternary structure, interacts with CtaA.

It localises to the cell membrane. It catalyses the reaction heme b + (2E,6E)-farnesyl diphosphate + H2O = Fe(II)-heme o + diphosphate. It participates in porphyrin-containing compound metabolism; heme O biosynthesis; heme O from protoheme: step 1/1. In terms of biological role, converts heme B (protoheme IX) to heme O by substitution of the vinyl group on carbon 2 of heme B porphyrin ring with a hydroxyethyl farnesyl side group. This chain is Protoheme IX farnesyltransferase, found in Staphylococcus epidermidis (strain ATCC 12228 / FDA PCI 1200).